A 153-amino-acid polypeptide reads, in one-letter code: UPF0756 membrane protein BCB4264_A4705 (153 aa).

4 helical membrane-spanning segments follow: residues 8–28 (FLFI…TVAI), 54–74 (LGVT…EIGF), 87–107 (WIAL…VQLL), and 117–137 (LVFG…GPLI).

This sequence belongs to the UPF0756 family.

The protein localises to the cell membrane. The sequence is that of UPF0756 membrane protein BCB4264_A4705 from Bacillus cereus (strain B4264).